A 186-amino-acid chain; its full sequence is Ribosome-recycling factor (186 aa).

The protein belongs to the RRF family.

Its subcellular location is the cytoplasm. Responsible for the release of ribosomes from messenger RNA at the termination of protein biosynthesis. May increase the efficiency of translation by recycling ribosomes from one round of translation to another. The sequence is that of Ribosome-recycling factor from Rubrobacter xylanophilus (strain DSM 9941 / JCM 11954 / NBRC 16129 / PRD-1).